The following is a 356-amino-acid chain: tRNA N6-adenosine threonylcarbamoyltransferase (356 aa).

A divalent metal cation contacts are provided by His-122, His-126, and Tyr-143. Residues Tyr-143–Gly-147, Asp-175, Gly-190, Glu-194, and Asn-287 each bind substrate. An a divalent metal cation-binding site is contributed by Asp-315.

Belongs to the KAE1 / TsaD family. As to quaternary structure, component of the EKC/KEOPS complex composed of at least BUD32, CGI121, GON7, KAE1 and PCC1; the whole complex dimerizes. A divalent metal cation serves as cofactor.

It is found in the cytoplasm. It localises to the nucleus. It carries out the reaction L-threonylcarbamoyladenylate + adenosine(37) in tRNA = N(6)-L-threonylcarbamoyladenosine(37) in tRNA + AMP + H(+). Component of the EKC/KEOPS complex that is required for the formation of a threonylcarbamoyl group on adenosine at position 37 (t(6)A37) in tRNAs that read codons beginning with adenine. The complex is probably involved in the transfer of the threonylcarbamoyl moiety of threonylcarbamoyl-AMP (TC-AMP) to the N6 group of A37. KAE1 likely plays a direct catalytic role in this reaction, but requires other protein(s) of the complex to fulfill this activity. The EKC/KEOPS complex also promotes both telomere uncapping and telomere elongation. The complex is required for efficient recruitment of transcriptional coactivators. In Chaetomium globosum (strain ATCC 6205 / CBS 148.51 / DSM 1962 / NBRC 6347 / NRRL 1970) (Soil fungus), this protein is tRNA N6-adenosine threonylcarbamoyltransferase.